We begin with the raw amino-acid sequence, 41 residues long: Large ribosomal subunit protein bL36 (41 aa).

Belongs to the bacterial ribosomal protein bL36 family.

In Xanthomonas axonopodis pv. citri (strain 306), this protein is Large ribosomal subunit protein bL36.